A 217-amino-acid polypeptide reads, in one-letter code: Thiosulfate dehydrogenase electron acceptor (217 aa).

The N-terminal stretch at Met1 to Ala28 is a signal peptide. 2 Cytochrome c domains span residues Ala29–Lys104 and Ala116–Pro206. The heme c site is built by Cys37, Cys40, His41, Cys137, Cys140, and His141.

Post-translationally, binds 2 heme c groups covalently per subunit.

Functionally, acts as an electron acceptor for the thiosulfate dehydrogenase TsdA. This is Thiosulfate dehydrogenase electron acceptor (tsdB) from Thiomonas intermedia (strain K12) (Thiobacillus intermedius).